Consider the following 321-residue polypeptide: Solute carrier family 25 member 33 (321 aa).

Solcar repeat units follow at residues 9-118 (ENTL…AKEQ), 126-213 (NSNI…LKKY), and 231-315 (TNFF…IVYL). The next 6 helical transmembrane spans lie at 12–32 (LLHL…TCPL), 49–65 (VYYP…AGVV), 121–141 (GVFV…AAFV), 190–210 (LTAS…YESL), 233–253 (FFGL…VAYP), and 298–318 (QIPN…LLED).

Belongs to the mitochondrial carrier (TC 2.A.29) family.

Its subcellular location is the mitochondrion inner membrane. The enzyme catalyses UTP(in) + UDP(out) = UTP(out) + UDP(in). It catalyses the reaction dUTP(out) + UTP(in) = dUTP(in) + UTP(out). It carries out the reaction 5-methyl-UTP(out) + UTP(in) = 5-methyl-UTP(in) + UTP(out). The catalysed reaction is 5-methyl-UDP(out) + UTP(in) = 5-methyl-UDP(in) + UTP(out). The enzyme catalyses UTP(in) + CTP(out) = UTP(out) + CTP(in). It catalyses the reaction CDP(out) + UTP(in) = CDP(in) + UTP(out). It carries out the reaction dCTP(out) + UTP(in) = dCTP(in) + UTP(out). The catalysed reaction is dCDP(out) + UTP(in) = dCDP(in) + UTP(out). The enzyme catalyses UTP(in) + GTP(out) = UTP(out) + GTP(in). It catalyses the reaction UTP(in) + GDP(out) = UTP(out) + GDP(in). It carries out the reaction dGTP(out) + UTP(in) = dGTP(in) + UTP(out). The catalysed reaction is dGDP(out) + UTP(in) = dGDP(in) + UTP(out). The enzyme catalyses ITP(out) + UTP(in) = ITP(in) + UTP(out). Functionally, mitochondrial transporter that imports/exports pyrimidine nucleotides into and from mitochondria. Selectively transports uridine, thymidine, guanosine, cytosine and inosine (deoxy)nucleoside di- and triphosphates by an antiport mechanism. May import (deoxy)nucleoside triphosphates in exchange for intramitochondrial (deoxy)nucleoside diphosphates, thus providing precursors necessary for de novo synthesis of mitochondrial DNA and RNA while exporting products of their catabolism. Participates in mitochondrial genome maintenance, regulation of mitochondrial membrane potential and mitochondrial respiration. Upon INS or IGF1 stimulation regulates cell growth and proliferation by controlling mitochondrial DNA replication and transcription, the ratio of mitochondria-to nuclear-encoded components of the electron transport chain resulting in control of mitochondrial ROS production. Participates in dendritic cell endocytosis and may associate with mitochondrial oxidative phosphorylation. This chain is Solute carrier family 25 member 33 (SLC25A33), found in Bos taurus (Bovine).